We begin with the raw amino-acid sequence, 654 residues long: tRNA 5-methylaminomethyl-2-thiouridine biosynthesis bifunctional protein MnmC (654 aa).

The interval 1-235 is tRNA (mnm(5)s(2)U34)-methyltransferase; sequence MSDFQHAQLD…KREMLGGTYQ (235 aa). Residues 261–654 are FAD-dependent cmnm(5)s(2)U34 oxidoreductase; that stretch reads VGGGLAGCAS…LRDLVRGQRG (394 aa).

The protein in the N-terminal section; belongs to the methyltransferase superfamily. tRNA (mnm(5)s(2)U34)-methyltransferase family. It in the C-terminal section; belongs to the DAO family. The cofactor is FAD.

Its subcellular location is the cytoplasm. It catalyses the reaction 5-aminomethyl-2-thiouridine(34) in tRNA + S-adenosyl-L-methionine = 5-methylaminomethyl-2-thiouridine(34) in tRNA + S-adenosyl-L-homocysteine + H(+). Functionally, catalyzes the last two steps in the biosynthesis of 5-methylaminomethyl-2-thiouridine (mnm(5)s(2)U) at the wobble position (U34) in tRNA. Catalyzes the FAD-dependent demodification of cmnm(5)s(2)U34 to nm(5)s(2)U34, followed by the transfer of a methyl group from S-adenosyl-L-methionine to nm(5)s(2)U34, to form mnm(5)s(2)U34. The chain is tRNA 5-methylaminomethyl-2-thiouridine biosynthesis bifunctional protein MnmC from Pseudomonas aeruginosa (strain UCBPP-PA14).